The sequence spans 116 residues: S-adenosylmethionine decarboxylase proenzyme (116 aa).

Catalysis depends on Ser-62, which acts as the Schiff-base intermediate with substrate; via pyruvic acid. At Ser-62 the chain carries Pyruvic acid (Ser); by autocatalysis. His-67 functions as the Proton acceptor; for processing activity in the catalytic mechanism. Catalysis depends on Cys-82, which acts as the Proton donor; for catalytic activity.

This sequence belongs to the prokaryotic AdoMetDC family. Type 1 subfamily. As to quaternary structure, heterotetramer of two alpha and two beta chains arranged as a dimer of alpha/beta heterodimers. Pyruvate is required as a cofactor. Post-translationally, is synthesized initially as an inactive proenzyme. Formation of the active enzyme involves a self-maturation process in which the active site pyruvoyl group is generated from an internal serine residue via an autocatalytic post-translational modification. Two non-identical subunits are generated from the proenzyme in this reaction, and the pyruvate is formed at the N-terminus of the alpha chain, which is derived from the carboxyl end of the proenzyme. The post-translation cleavage follows an unusual pathway, termed non-hydrolytic serinolysis, in which the side chain hydroxyl group of the serine supplies its oxygen atom to form the C-terminus of the beta chain, while the remainder of the serine residue undergoes an oxidative deamination to produce ammonia and the pyruvoyl group blocking the N-terminus of the alpha chain.

The enzyme catalyses S-adenosyl-L-methionine + H(+) = S-adenosyl 3-(methylsulfanyl)propylamine + CO2. It participates in amine and polyamine biosynthesis; S-adenosylmethioninamine biosynthesis; S-adenosylmethioninamine from S-adenosyl-L-methionine: step 1/1. Catalyzes the decarboxylation of S-adenosylmethionine to S-adenosylmethioninamine (dcAdoMet), the propylamine donor required for the synthesis of the polyamines spermine and spermidine from the diamine putrescine. This chain is S-adenosylmethionine decarboxylase proenzyme, found in Thermomicrobium roseum (strain ATCC 27502 / DSM 5159 / P-2).